We begin with the raw amino-acid sequence, 292 residues long: Protein/nucleic acid deglycase HchA (292 aa).

Positions 1–12 (MSQDVNELSKQP) are enriched in polar residues. The interval 1 to 23 (MSQDVNELSKQPTPDKAEDNAFF) is disordered. The Nucleophile role is filled by C190.

Belongs to the peptidase C56 family. HchA subfamily.

The protein localises to the cytoplasm. The catalysed reaction is N(omega)-(1-hydroxy-2-oxopropyl)-L-arginyl-[protein] + H2O = lactate + L-arginyl-[protein] + H(+). It carries out the reaction N(6)-(1-hydroxy-2-oxopropyl)-L-lysyl-[protein] + H2O = lactate + L-lysyl-[protein] + H(+). It catalyses the reaction S-(1-hydroxy-2-oxopropyl)-L-cysteinyl-[protein] + H2O = lactate + L-cysteinyl-[protein] + H(+). The enzyme catalyses N(omega)-(1-hydroxy-2-oxoethyl)-L-arginyl-[protein] + H2O = L-arginyl-[protein] + glycolate + H(+). The catalysed reaction is N(6)-(1-hydroxy-2-oxoethyl)-L-lysyl-[protein] + H2O = glycolate + L-lysyl-[protein] + H(+). It carries out the reaction S-(1-hydroxy-2-oxoethyl)-L-cysteinyl-[protein] + H2O = glycolate + L-cysteinyl-[protein] + H(+). It catalyses the reaction N(2)-(1-hydroxy-2-oxopropyl)-dGTP + H2O = lactate + dGTP + H(+). The enzyme catalyses N(2)-(1-hydroxy-2-oxopropyl)-GTP + H2O = lactate + GTP + H(+). The catalysed reaction is N(2)-(1-hydroxy-2-oxopropyl)-GDP + H2O = lactate + GDP + H(+). It carries out the reaction N(2)-(1-hydroxy-2-oxopropyl)-GMP + H2O = lactate + GMP + H(+). It catalyses the reaction N(2)-(1-hydroxy-2-oxoethyl)-dGTP + H2O = dGTP + glycolate + H(+). The enzyme catalyses N(2)-(1-hydroxy-2-oxoethyl)-GTP + H2O = glycolate + GTP + H(+). The catalysed reaction is N(2)-(1-hydroxy-2-oxoethyl)-GDP + H2O = glycolate + GDP + H(+). It carries out the reaction N(2)-(1-hydroxy-2-oxoethyl)-GMP + H2O = glycolate + GMP + H(+). It catalyses the reaction an N(2)-(1-hydroxy-2-oxopropyl)-guanosine in RNA + H2O = a guanosine in RNA + lactate + H(+). The enzyme catalyses an N(2)-(1-hydroxy-2-oxopropyl)-2'-deoxyguanosine in DNA + H2O = a 2'-deoxyguanosine in DNA + lactate + H(+). The catalysed reaction is an N(2)-(1-hydroxy-2-oxoethyl)-guanosine in RNA + H2O = a guanosine in RNA + glycolate + H(+). It carries out the reaction an N(2)-(1-hydroxy-2-oxoethyl)-2'-deoxyguanosine in DNA + H2O = a 2'-deoxyguanosine in DNA + glycolate + H(+). Functionally, protein and nucleotide deglycase that catalyzes the deglycation of the Maillard adducts formed between amino groups of proteins or nucleotides and reactive carbonyl groups of glyoxals. Thus, functions as a protein deglycase that repairs methylglyoxal- and glyoxal-glycated proteins, and releases repaired proteins and lactate or glycolate, respectively. Deglycates cysteine, arginine and lysine residues in proteins, and thus reactivates these proteins by reversing glycation by glyoxals. Acts on early glycation intermediates (hemithioacetals and aminocarbinols), preventing the formation of Schiff bases and advanced glycation endproducts (AGE). Also functions as a nucleotide deglycase able to repair glycated guanine in the free nucleotide pool (GTP, GDP, GMP, dGTP) and in DNA and RNA. Is thus involved in a major nucleotide repair system named guanine glycation repair (GG repair), dedicated to reversing methylglyoxal and glyoxal damage via nucleotide sanitization and direct nucleic acid repair. Plays an important role in protecting cells from carbonyl stress. This chain is Protein/nucleic acid deglycase HchA, found in Staphylococcus aureus (strain MSSA476).